The chain runs to 854 residues: Protein translocase subunit SecA (854 aa).

Residues Gln89, 107 to 111 (GEGKT), and Asp501 each bind ATP.

The protein belongs to the SecA family. In terms of assembly, monomer and homodimer. Part of the essential Sec protein translocation apparatus which comprises SecA, SecYEG and auxiliary proteins SecDF-YajC and YidC.

It is found in the cell inner membrane. The protein resides in the cytoplasm. The catalysed reaction is ATP + H2O + cellular proteinSide 1 = ADP + phosphate + cellular proteinSide 2.. In terms of biological role, part of the Sec protein translocase complex. Interacts with the SecYEG preprotein conducting channel. Has a central role in coupling the hydrolysis of ATP to the transfer of proteins into and across the cell membrane, serving both as a receptor for the preprotein-SecB complex and as an ATP-driven molecular motor driving the stepwise translocation of polypeptide chains across the membrane. The protein is Protein translocase subunit SecA of Pelagibacter ubique (strain HTCC1062).